The following is a 101-amino-acid chain: Small ribosomal subunit protein uS14 (101 aa).

Belongs to the universal ribosomal protein uS14 family. As to quaternary structure, part of the 30S ribosomal subunit. Contacts proteins S3 and S10.

Its function is as follows. Binds 16S rRNA, required for the assembly of 30S particles and may also be responsible for determining the conformation of the 16S rRNA at the A site. This is Small ribosomal subunit protein uS14 from Cellvibrio japonicus (strain Ueda107) (Pseudomonas fluorescens subsp. cellulosa).